The following is a 440-amino-acid chain: C4-dicarboxylate TRAP transporter large permease protein DctM (440 aa).

A run of 13 helical transmembrane segments spans residues 4–24 (LIIFGLLIALMLTGMPISISL), 54–74 (FEIMAIPFFILAGNFLTHGGV), 89–109 (WHGGLGLAGVIACALFAAVSG), 112–132 (PATVVAIGSVILPAMVNQGFP), 148–168 (ILIPPSIVMVMYAVATSGMVV), 181–201 (VGELFMAGVVPGLMLAGFLAF), 230–250 (AAWGLMLIVVVIGGIYAGIFT), 255–275 (AAMSAVYAFFISVFVYKDLTL), 291–311 (MLLYIITNAVLFSFLMAHEGI), 318–338 (WMVNAGLSWWMFLIIVNILLL), 349–369 (IVLIMAPILFPVAVRLGIDPV), 370–390 (HFGIMIVVNMEVGMCHPPVGL), and 410–430 (VWPWLLTMLAFLVLVTYVPAI).

Belongs to the TRAP transporter large permease family. As to quaternary structure, the complex comprises the extracytoplasmic solute receptor protein DctP, and the two transmembrane proteins DctQ and DctM.

The protein localises to the cell inner membrane. In terms of biological role, part of the tripartite ATP-independent periplasmic (TRAP) transport system DctPQM involved in C4-dicarboxylates uptake. The sequence is that of C4-dicarboxylate TRAP transporter large permease protein DctM from Rhodobacter capsulatus (Rhodopseudomonas capsulata).